The chain runs to 213 residues: Na(+)-translocating NADH-quinone reductase subunit D (213 aa).

A run of 6 helical transmembrane segments spans residues 21-41 (PLIAILGICSALAVTTTVKTA), 42-62 (ITMGLAVSFVTGCSSFFVSLL), 77-97 (IIISLFVIVIDQFLKAFFFNI), 101-121 (LSVFVGLIITNCIVMGRAESL), 131-151 (FLDGLASGLGYGWVLVFVSII), and 183-203 (FGLMVLAPSAFFLLGIMIWVV).

This sequence belongs to the NqrDE/RnfAE family. In terms of assembly, composed of six subunits; NqrA, NqrB, NqrC, NqrD, NqrE and NqrF.

It is found in the cell inner membrane. The catalysed reaction is a ubiquinone + n Na(+)(in) + NADH + H(+) = a ubiquinol + n Na(+)(out) + NAD(+). NQR complex catalyzes the reduction of ubiquinone-1 to ubiquinol by two successive reactions, coupled with the transport of Na(+) ions from the cytoplasm to the periplasm. NqrA to NqrE are probably involved in the second step, the conversion of ubisemiquinone to ubiquinol. The chain is Na(+)-translocating NADH-quinone reductase subunit D from Chlamydia felis (strain Fe/C-56) (Chlamydophila felis).